Here is a 267-residue protein sequence, read N- to C-terminus: GTP cyclohydrolase FolE2 (267 aa).

This sequence belongs to the GTP cyclohydrolase IV family.

It carries out the reaction GTP + H2O = 7,8-dihydroneopterin 3'-triphosphate + formate + H(+). It participates in cofactor biosynthesis; 7,8-dihydroneopterin triphosphate biosynthesis; 7,8-dihydroneopterin triphosphate from GTP: step 1/1. In terms of biological role, converts GTP to 7,8-dihydroneopterin triphosphate. In Cupriavidus necator (strain ATCC 17699 / DSM 428 / KCTC 22496 / NCIMB 10442 / H16 / Stanier 337) (Ralstonia eutropha), this protein is GTP cyclohydrolase FolE2.